The chain runs to 852 residues: Protein mono-ADP-ribosyltransferase PARP8 (852 aa).

Disordered regions lie at residues 113–134 and 289–310; these read NGEE…NDSE and SPSY…EQDG. The segment covering 123-134 has biased composition (acidic residues); sequence VEEDSEGDNDSE. Cys332, Cys366, Cys375, and Cys394 each carry ADP-ribosylcysteine. The 228-residue stretch at 615-842 folds into the PARP catalytic domain; it reads EMTQAPYLEI…QEGGIHKEIL (228 aa). The tract at residues 748 to 775 is disordered; that stretch reads QKVSSKDEPASSSKSSNASQSQKKGQQS. A compositionally biased stretch (low complexity) spans 757 to 775; the sequence is ASSSKSSNASQSQKKGQQS.

This sequence belongs to the ARTD/PARP family. Auto-mono-ADP-ribosylated.

It carries out the reaction L-cysteinyl-[protein] + NAD(+) = S-(ADP-D-ribosyl)-L-cysteinyl-[protein] + nicotinamide + H(+). In terms of biological role, mono-ADP-ribosyltransferase that mediates mono-ADP-ribosylation of target proteins. The chain is Protein mono-ADP-ribosyltransferase PARP8 from Mus musculus (Mouse).